We begin with the raw amino-acid sequence, 316 residues long: Deoxyribonuclease-1-like 1 (316 aa).

The signal sequence occupies residues 1–28 (MHSSGGFQKAIHGHALLLLLLLASGAET). Catalysis depends on residues E107 and H158. C197 and C234 are disulfide-bonded. An N-linked (GlcNAc...) asparagine glycan is attached at N271.

It belongs to the DNase I family.

The protein resides in the endoplasmic reticulum. The polypeptide is Deoxyribonuclease-1-like 1 (DNASE1L1) (Bos taurus (Bovine)).